The chain runs to 188 residues: MAIEQAWFMEENDEDQRLPHHRNPKQFVSLDHLADLGVLYWKLNPKDYENDQELKEIRESRGYNYMDLLDLCPERVENYEEKLKNFYTEHIHGDEEIRYCLEGSGYFDVRDKEDRWIRIWIKEGDMIVLPAGIYHRFTLDTGNYVKLMRLFVGEPVWTAYNRPQEHHPARKNYINNVTHKVGVPLEAH.

Fe(2+)-binding residues include His90, His92, Glu96, and His135. Ni(2+)-binding residues include His90, His92, Glu96, and His135.

This sequence belongs to the acireductone dioxygenase (ARD) family. It depends on Fe(2+) as a cofactor. Ni(2+) serves as cofactor.

It localises to the cytoplasm. It is found in the nucleus. The catalysed reaction is 1,2-dihydroxy-5-(methylsulfanyl)pent-1-en-3-one + O2 = 4-methylsulfanyl-2-oxobutanoate + formate + 2 H(+). It catalyses the reaction 1,2-dihydroxy-5-(methylsulfanyl)pent-1-en-3-one + O2 = 3-(methylsulfanyl)propanoate + CO + formate + 2 H(+). The protein operates within amino-acid biosynthesis; L-methionine biosynthesis via salvage pathway; L-methionine from S-methyl-5-thio-alpha-D-ribose 1-phosphate: step 5/6. In terms of biological role, catalyzes 2 different reactions between oxygen and the acireductone 1,2-dihydroxy-3-keto-5-methylthiopentene (DHK-MTPene) depending upon the metal bound in the active site. Fe-containing acireductone dioxygenase (Fe-ARD) produces formate and 2-keto-4-methylthiobutyrate (KMTB), the alpha-ketoacid precursor of methionine in the methionine recycle pathway. Ni-containing acireductone dioxygenase (Ni-ARD) produces methylthiopropionate, carbon monoxide and formate, and does not lie on the methionine recycle pathway. This chain is Acireductone dioxygenase 1, found in Vitis vinifera (Grape).